An 843-amino-acid polypeptide reads, in one-letter code: Probable disease resistance protein At5g47250 (843 aa).

Residues 28-58 are a coiled coil; sequence MLKENLVLLKSAFDELKAEKEDVVNRVNAGE. The 300-residue stretch at 141 to 440 folds into the NB-ARC domain; the sequence is TEQPPPPVVE…GEGFIDEKDG (300 aa). 183-190 contributes to the ATP binding site; that stretch reads GMGGVGKT. LRR repeat units follow at residues 510-531, 535-556, 559-581, 583-604, and 606-628; these read TVTKMSLFNNEIKNIPDDPEFP, NLVTLFLQNNRLVDIVGKFFLV, TLVVLDLSWNFQITELPKGISAL, SLRLLNLSGTSIKHLPEGLGVL, and KLIHLNLESTSNLRSVGLISELQ.

This sequence belongs to the disease resistance NB-LRR family.

In terms of biological role, probable disease resistance protein. The sequence is that of Probable disease resistance protein At5g47250 from Arabidopsis thaliana (Mouse-ear cress).